Consider the following 92-residue polypeptide: Small ribosomal subunit protein uS19 (92 aa).

This sequence belongs to the universal ribosomal protein uS19 family.

In terms of biological role, protein S19 forms a complex with S13 that binds strongly to the 16S ribosomal RNA. The polypeptide is Small ribosomal subunit protein uS19 (Nostoc sp. (strain PCC 7120 / SAG 25.82 / UTEX 2576)).